A 371-amino-acid chain; its full sequence is 4-hydroxy-3-methylbut-2-en-1-yl diphosphate synthase (flavodoxin) (371 aa).

Cys270, Cys273, Cys305, and Glu312 together coordinate [4Fe-4S] cluster.

This sequence belongs to the IspG family. Requires [4Fe-4S] cluster as cofactor.

The catalysed reaction is (2E)-4-hydroxy-3-methylbut-2-enyl diphosphate + oxidized [flavodoxin] + H2O + 2 H(+) = 2-C-methyl-D-erythritol 2,4-cyclic diphosphate + reduced [flavodoxin]. Its pathway is isoprenoid biosynthesis; isopentenyl diphosphate biosynthesis via DXP pathway; isopentenyl diphosphate from 1-deoxy-D-xylulose 5-phosphate: step 5/6. Functionally, converts 2C-methyl-D-erythritol 2,4-cyclodiphosphate (ME-2,4cPP) into 1-hydroxy-2-methyl-2-(E)-butenyl 4-diphosphate. The chain is 4-hydroxy-3-methylbut-2-en-1-yl diphosphate synthase (flavodoxin) from Shewanella baltica (strain OS223).